The primary structure comprises 212 residues: Large ribosomal subunit protein uL3 (212 aa).

Residues 135–156 (MTHGNSRSHRVPGSIGQNQSPG) form a disordered region. Q153 carries the post-translational modification N5-methylglutamine.

The protein belongs to the universal ribosomal protein uL3 family. In terms of assembly, part of the 50S ribosomal subunit. Forms a cluster with proteins L14 and L19. In terms of processing, methylated by PrmB.

One of the primary rRNA binding proteins, it binds directly near the 3'-end of the 23S rRNA, where it nucleates assembly of the 50S subunit. The protein is Large ribosomal subunit protein uL3 of Tolumonas auensis (strain DSM 9187 / NBRC 110442 / TA 4).